The sequence spans 523 residues: Probable lipid II flippase MurJ (523 aa).

Helical transmembrane passes span 98 to 118, 146 to 166, 170 to 190, 201 to 221, 246 to 266, 284 to 304, 328 to 348, 360 to 380, 395 to 415, 422 to 442, 461 to 481, and 489 to 509; these read AFYSLLLVFLGVLTLLGIVYV, IMFGFVFFVCTYAFYMGILNA, FGLPALAPALLNVSMLVFTFM, GLAWGVLIGGLLQALLLAVAL, MLPGLIGMGLLQFSTLVNLYF, LLELPLSLISVSIGAALLPTL, LFLAWPAALGLYILAEPIIEV, VQMTAAILRIYAVSLLLVSCS, VPMVLALVSLAVHVSLAPVLM, GLMISGVVAALINAVLLMGLL, FVLAGAGMVISLQAYELLMAQ, and LALFVTILLAVVAYFGLAYVL.

The protein belongs to the MurJ/MviN family.

Its subcellular location is the cell inner membrane. The protein operates within cell wall biogenesis; peptidoglycan biosynthesis. In terms of biological role, involved in peptidoglycan biosynthesis. Transports lipid-linked peptidoglycan precursors from the inner to the outer leaflet of the cytoplasmic membrane. The sequence is that of Probable lipid II flippase MurJ from Bdellovibrio bacteriovorus (strain ATCC 15356 / DSM 50701 / NCIMB 9529 / HD100).